The following is a 165-amino-acid chain: Protein-export protein SecB (165 aa).

This sequence belongs to the SecB family. As to quaternary structure, homotetramer, a dimer of dimers. One homotetramer interacts with 1 SecA dimer.

It localises to the cytoplasm. Its function is as follows. One of the proteins required for the normal export of preproteins out of the cell cytoplasm. It is a molecular chaperone that binds to a subset of precursor proteins, maintaining them in a translocation-competent state. It also specifically binds to its receptor SecA. This is Protein-export protein SecB from Ruegeria pomeroyi (strain ATCC 700808 / DSM 15171 / DSS-3) (Silicibacter pomeroyi).